The chain runs to 209 residues: Large ribosomal subunit protein uL3 (209 aa).

Residues 118-151 (GFQGAIKRHGQSRGPMSHGSRYHRRPGSMGPVAP) form a disordered region.

This sequence belongs to the universal ribosomal protein uL3 family. As to quaternary structure, part of the 50S ribosomal subunit. Forms a cluster with proteins L14 and L19.

Functionally, one of the primary rRNA binding proteins, it binds directly near the 3'-end of the 23S rRNA, where it nucleates assembly of the 50S subunit. The protein is Large ribosomal subunit protein uL3 of Enterococcus faecalis (strain ATCC 700802 / V583).